The chain runs to 363 residues: Phospho-N-acetylmuramoyl-pentapeptide-transferase (363 aa).

10 helical membrane passes run 15–33, 82–102, 106–126, 147–167, 183–203, 207–227, 233–253, 260–280, 285–305, and 341–361; these read FTTLFFLITLSLIVNSFIF, NTPTMGGIFIILPLLLLLLIV, FYSMGIILLFFGSLSFFIIGF, FILQSLISILFIVLAYQNGYI, IVIFPICFVTLVGLSNAVNLT, DGLASGCGSIVFYGLGTEIFI, LIIYGLIAYAMSGLCVGFLKF, IFMGDTGSLTIGATLGYISIL, FTLFIISGIFVIEALSVIIQV, and IVENFWKINILLVILGIVLKI.

Belongs to the glycosyltransferase 4 family. MraY subfamily. Requires Mg(2+) as cofactor.

It localises to the cell inner membrane. It carries out the reaction UDP-N-acetyl-alpha-D-muramoyl-L-alanyl-gamma-D-glutamyl-meso-2,6-diaminopimeloyl-D-alanyl-D-alanine + di-trans,octa-cis-undecaprenyl phosphate = di-trans,octa-cis-undecaprenyl diphospho-N-acetyl-alpha-D-muramoyl-L-alanyl-D-glutamyl-meso-2,6-diaminopimeloyl-D-alanyl-D-alanine + UMP. It participates in cell wall biogenesis; peptidoglycan biosynthesis. Catalyzes the initial step of the lipid cycle reactions in the biosynthesis of the cell wall peptidoglycan: transfers peptidoglycan precursor phospho-MurNAc-pentapeptide from UDP-MurNAc-pentapeptide onto the lipid carrier undecaprenyl phosphate, yielding undecaprenyl-pyrophosphoryl-MurNAc-pentapeptide, known as lipid I. The protein is Phospho-N-acetylmuramoyl-pentapeptide-transferase of Prochlorococcus marinus (strain MIT 9515).